A 467-amino-acid polypeptide reads, in one-letter code: Chlorophenol O-methyltransferase (467 aa).

Residues 1–41 (MAELRAPSSLSTERNGSASNTDVDKQKLNHLYQNGNKKTGS) are disordered. Polar residues-rich tracts occupy residues 8 to 21 (SSLS…ASNT) and 31 to 41 (LYQNGNKKTGS). Aspartate 320 contributes to the S-adenosyl-L-methionine binding site. Histidine 368 acts as the Proton acceptor in catalysis.

Belongs to the class I-like SAM-binding methyltransferase superfamily. Cation-independent O-methyltransferase family.

The catalysed reaction is 2,4,6-trichlorophenol + S-adenosyl-L-methionine = 2,4,6-trichloroanisole + S-adenosyl-L-homocysteine. Its activity is regulated as follows. S-adenosyl-L-homocysteine acts as a competitive inhibitor. Also strongly inhibited by low concentrations of several metal ions, such as Cu(2+), Hg(2+), Zn(2+), and Ag(+), and to a lesser extent by p-chloromercuribenzoic acid, but it is not significantly affected by several thiols or other thiol reagents. Its function is as follows. Chlorophenol O-methyltransferase that methylates chlorophenols into chloroanisoles which are thought to be responsible for cork taint of wines. The only single chlorophenol (CP) methylated is 2-CP; neither 3-CP nor 4-CP are effective substrates. Within the dichlorophenols (DCPs), 2,4-DCP supports the highest rate of O-methylation, and the activity decreases in the following order: 2,3-DCP, 2,5-DCP, 2,6-DCP, and 3,4-DCP. Within the trichlorophenol (TCP) group, the maximal activity is observed with 2,3,4-TCP, whereas there is increasingly reduced activity with 2,4,5-TCP, 2,4,6-TCP, and 2,3,6-TCP. The only tetrachlorophenol (TeCP) that is methylated is 2,3,4,5-TeCP, since no activity can be detected with 2,3,4,6-TeCP and 2,3,5,6-TeCP. Is also able to methylate other halogenated phenols containing fluoro or bromo substituents, whereas other hydroxylated compounds, such as hydroxylated benzoic acids, hydroxybenzaldehydes, phenol, 2-metoxyphenol, and dihydroxybenzene, were not methylated. This chain is Chlorophenol O-methyltransferase, found in Trichoderma longibrachiatum.